The sequence spans 476 residues: Adenosylhomocysteinase (476 aa).

3 residues coordinate substrate: T67, D142, and E202. 203-205 (TTT) contacts NAD(+). Residues K232 and D236 each contribute to the substrate site. NAD(+) contacts are provided by residues N237, 266–271 (GYGDVG), E289, N324, 345–347 (IGH), and N390.

Belongs to the adenosylhomocysteinase family. NAD(+) is required as a cofactor.

It is found in the cytoplasm. The catalysed reaction is S-adenosyl-L-homocysteine + H2O = L-homocysteine + adenosine. It functions in the pathway amino-acid biosynthesis; L-homocysteine biosynthesis; L-homocysteine from S-adenosyl-L-homocysteine: step 1/1. May play a key role in the regulation of the intracellular concentration of adenosylhomocysteine. The protein is Adenosylhomocysteinase of Synechococcus sp. (strain CC9605).